Here is a 352-residue protein sequence, read N- to C-terminus: Anthranilate phosphoribosyltransferase (352 aa).

Residues G94, 97-98 (GS), S102, 104-107 (NIST), 122-130 (KHGNRAVSS), and S134 contribute to the 5-phospho-alpha-D-ribose 1-diphosphate site. G94 lines the anthranilate pocket. S106 is a binding site for Mg(2+). An anthranilate-binding site is contributed by N125. R180 serves as a coordination point for anthranilate. Residues D239 and E240 each coordinate Mg(2+).

Belongs to the anthranilate phosphoribosyltransferase family. In terms of assembly, homodimer. The cofactor is Mg(2+).

It carries out the reaction N-(5-phospho-beta-D-ribosyl)anthranilate + diphosphate = 5-phospho-alpha-D-ribose 1-diphosphate + anthranilate. It participates in amino-acid biosynthesis; L-tryptophan biosynthesis; L-tryptophan from chorismate: step 2/5. Catalyzes the transfer of the phosphoribosyl group of 5-phosphorylribose-1-pyrophosphate (PRPP) to anthranilate to yield N-(5'-phosphoribosyl)-anthranilate (PRA). In Geobacter sp. (strain M21), this protein is Anthranilate phosphoribosyltransferase.